Consider the following 148-residue polypeptide: Leghemoglobin-1 (148 aa).

The Globin domain maps to 2–146 (GFTDKQEALV…LATAIKKAMK (145 aa)). 2 positions are modified to nitrated tyrosine: Tyr24 and Tyr29. Residue Ser44 coordinates heme b. Ser44 is subject to Phosphoserine. An O2-binding site is contributed by His61. 2 residues coordinate heme b: His93 and Lys96. Tyr134 bears the Nitrated tyrosine mark.

The protein belongs to the plant globin family. In terms of assembly, monomer. Post-translationally, nitrated in effective nodules and particularly in hypoxic conditions; this mechanism may play a protective role in the symbiosis by buffering toxic peroxynitrite NO(2)(-). Nitration level decrease during nodule senescence. In terms of processing, phosphorylation at Ser-44 disrupts the molecular environment of its porphyrin ring oxygen binding pocket, thus leading to a reduced oxygen consumption and to the delivery of oxygen O(2) to symbiosomes. As to expression, root nodules.

It localises to the cytoplasm. The protein localises to the cytosol. The protein resides in the nucleus. Functionally, leghemoglobin that reversibly binds oxygen O(2) through a pentacoordinated heme iron. In root nodules, facilitates the diffusion of oxygen to the bacteroids while preventing the bacterial nitrogenase from being inactivated by buffering dioxygen, nitric oxide and carbon monoxide, and promoting the formation of reactive oxygen species (ROS, e.g. H(2)O(2)). This role is essential for symbiotic nitrogen fixation (SNF). In Pisum sativum (Garden pea), this protein is Leghemoglobin-1.